The chain runs to 187 residues: MADTTFDIDDTERRMRGALQSLKQEFAGLRTGRATASLLEPIVVEAYGQSMPINQVGTIGVPEPRMLTVQVWDKGMISAVEKAIRSSGLGLNPNVDGMLIRLPIPELNQERRAELTKIAAKYTEQARIAVRNVRRDAMDELKRLEKDSHMSQDDHKSWSEKVQKLTDKVIGEIDAALAHKEADIMQV.

This sequence belongs to the RRF family.

Its subcellular location is the cytoplasm. In terms of biological role, responsible for the release of ribosomes from messenger RNA at the termination of protein biosynthesis. May increase the efficiency of translation by recycling ribosomes from one round of translation to another. The sequence is that of Ribosome-recycling factor from Parvibaculum lavamentivorans (strain DS-1 / DSM 13023 / NCIMB 13966).